The primary structure comprises 33 residues: Cytochrome b6-f complex subunit 8 (33 aa).

The chain crosses the membrane as a helical span at residues L2–V22.

Belongs to the PetN family. The 4 large subunits of the cytochrome b6-f complex are cytochrome b6, subunit IV (17 kDa polypeptide, PetD), cytochrome f and the Rieske protein, while the 4 small subunits are PetG, PetL, PetM and PetN. The complex functions as a dimer.

Its subcellular location is the cellular thylakoid membrane. Functionally, component of the cytochrome b6-f complex, which mediates electron transfer between photosystem II (PSII) and photosystem I (PSI), cyclic electron flow around PSI, and state transitions. The sequence is that of Cytochrome b6-f complex subunit 8 from Parasynechococcus marenigrum (strain WH8102).